Reading from the N-terminus, the 428-residue chain is Tol-Pal system protein TolB (428 aa).

An N-terminal signal peptide occupies residues 1 to 24 (MPSLKTLLRGVLVAAMLVAGSARA).

Belongs to the TolB family. As to quaternary structure, the Tol-Pal system is composed of five core proteins: the inner membrane proteins TolA, TolQ and TolR, the periplasmic protein TolB and the outer membrane protein Pal. They form a network linking the inner and outer membranes and the peptidoglycan layer.

The protein resides in the periplasm. Part of the Tol-Pal system, which plays a role in outer membrane invagination during cell division and is important for maintaining outer membrane integrity. The polypeptide is Tol-Pal system protein TolB (Chromobacterium violaceum (strain ATCC 12472 / DSM 30191 / JCM 1249 / CCUG 213 / NBRC 12614 / NCIMB 9131 / NCTC 9757 / MK)).